Here is a 304-residue protein sequence, read N- to C-terminus: Non-specific ribonucleoside hydrolase RihC (304 aa).

His233 is an active-site residue.

Belongs to the IUNH family. RihC subfamily.

In terms of biological role, hydrolyzes both purine and pyrimidine ribonucleosides with a broad-substrate specificity. The polypeptide is Non-specific ribonucleoside hydrolase RihC (Shigella flexneri serotype 5b (strain 8401)).